The following is a 448-amino-acid chain: Exodeoxyribonuclease 7 large subunit (448 aa).

Belongs to the XseA family. In terms of assembly, heterooligomer composed of large and small subunits.

The protein resides in the cytoplasm. It carries out the reaction Exonucleolytic cleavage in either 5'- to 3'- or 3'- to 5'-direction to yield nucleoside 5'-phosphates.. In terms of biological role, bidirectionally degrades single-stranded DNA into large acid-insoluble oligonucleotides, which are then degraded further into small acid-soluble oligonucleotides. In Alcanivorax borkumensis (strain ATCC 700651 / DSM 11573 / NCIMB 13689 / SK2), this protein is Exodeoxyribonuclease 7 large subunit.